Reading from the N-terminus, the 320-residue chain is uncharacterized protein (320 aa).

Residues 1–23 form the signal peptide; it reads MKLNLRFPSYFLPVVAASAFLVS. Residue Cys24 is the site of N-palmitoyl cysteine attachment. Cys24 is lipidated: S-diacylglycerol cysteine. Positions 160–181 are disordered; the sequence is KNHEHGHTHKNGETHEHDHDHH.

The protein localises to the cell membrane. This is an uncharacterized protein from Mycoplasma pneumoniae (strain ATCC 29342 / M129 / Subtype 1) (Mycoplasmoides pneumoniae).